A 372-amino-acid chain; its full sequence is Heterogeneous nuclear rnp K-like protein 2 (372 aa).

The segment covering 1 to 23 has biased composition (polar residues); sequence MSDINDPNSISLPVGSSCTSRGA. The interval 1 to 49 is disordered; that stretch reads MSDINDPNSISLPVGSSCTSRGASTETFTTSRSTTLFSSQQESKDEGNV. Residues 24-39 show a composition bias toward low complexity; the sequence is STETFTTSRSTTLFSS. KH domains are found at residues 59 to 123, 167 to 232, and 283 to 354; these read TINH…LGQI, IGTS…LLQI, and EFKA…ESML.

This sequence belongs to the HEK2 family. As to quaternary structure, binds RNA.

The protein localises to the cytoplasm. The protein resides in the P-body. Its subcellular location is the nucleus. It is found in the chromosome. It localises to the telomere. Its function is as follows. RNA-binding protein involved in the correct localization of transcripts in the cell. RNA localization is a widespread mechanism for achieving localized protein synthesis. Involved in structural and functional organization of telomeric chromatin and regulates silencing at the HMR locus. The chain is Heterogeneous nuclear rnp K-like protein 2 (HEK2) from Zygosaccharomyces rouxii (strain ATCC 2623 / CBS 732 / NBRC 1130 / NCYC 568 / NRRL Y-229).